The following is a 205-amino-acid chain: Meiotic nuclear division protein 1 homolog (205 aa).

An N-acetylserine modification is found at Ser2. The stretch at 83–173 (KRKLEVLDSQ…EAANRWTDNI (91 aa)) forms a coiled coil.

Belongs to the MND1 family. Heterodimer with PSMC3IP/HOP2. MND1-PSMC3IP interacts with DMC1 and RAD51 and binds preferentially to dsDNA.

The protein resides in the nucleus. Its function is as follows. Required for proper homologous chromosome pairing and efficient cross-over and intragenic recombination during meiosis. Stimulates both DMC1- and RAD51-mediated homologous strand assimilation, which is required for the resolution of meiotic double-strand breaks. This Bos taurus (Bovine) protein is Meiotic nuclear division protein 1 homolog.